A 461-amino-acid polypeptide reads, in one-letter code: Eukaryotic translation initiation factor 3 subunit M (461 aa).

Residues 42 to 61 are disordered; it reads LLEPLRQQEQSDAEPDRKQR. In terms of domain architecture, PCI spans 205–376; it reads DQELAQTHVV…SEFLVHRATY (172 aa). The interval 422–461 is disordered; that stretch reads AAEEAAQGKSGDKKGDRRQRRDQPQQSQPAPEAATAVAAE. The span at 431 to 444 shows a compositional bias: basic and acidic residues; it reads SGDKKGDRRQRRDQ. The span at 445–461 shows a compositional bias: low complexity; that stretch reads PQQSQPAPEAATAVAAE.

It belongs to the eIF-3 subunit M family. Component of the eukaryotic translation initiation factor 3 (eIF-3) complex.

The protein localises to the cytoplasm. In terms of biological role, component of the eukaryotic translation initiation factor 3 (eIF-3) complex, which is involved in protein synthesis of a specialized repertoire of mRNAs and, together with other initiation factors, stimulates binding of mRNA and methionyl-tRNAi to the 40S ribosome. The eIF-3 complex specifically targets and initiates translation of a subset of mRNAs involved in cell proliferation. This Aspergillus terreus (strain NIH 2624 / FGSC A1156) protein is Eukaryotic translation initiation factor 3 subunit M.